We begin with the raw amino-acid sequence, 77 residues long: Liver-expressed antimicrobial peptide 2 (77 aa).

Positions 1 to 22 are cleaved as a signal peptide; sequence MWHLKLCAVLMIFLLLLGQIDG. The propeptide occupies 23–37; sequence SPIPEVSSAKRRPRR. Intrachain disulfides connect cysteine 54–cysteine 65 and cysteine 60–cysteine 70.

It belongs to the LEAP2 family.

It localises to the secreted. Its function is as follows. Has an antimicrobial activity. This chain is Liver-expressed antimicrobial peptide 2 (LEAP2), found in Homo sapiens (Human).